Consider the following 239-residue polypeptide: Ribonuclease PH (239 aa).

Residues Arg-86 and 124–126 (GTR) each bind phosphate.

The protein belongs to the RNase PH family. As to quaternary structure, homohexameric ring arranged as a trimer of dimers.

It carries out the reaction tRNA(n+1) + phosphate = tRNA(n) + a ribonucleoside 5'-diphosphate. Its function is as follows. Phosphorolytic 3'-5' exoribonuclease that plays an important role in tRNA 3'-end maturation. Removes nucleotide residues following the 3'-CCA terminus of tRNAs; can also add nucleotides to the ends of RNA molecules by using nucleoside diphosphates as substrates, but this may not be physiologically important. Probably plays a role in initiation of 16S rRNA degradation (leading to ribosome degradation) during starvation. This Cupriavidus taiwanensis (strain DSM 17343 / BCRC 17206 / CCUG 44338 / CIP 107171 / LMG 19424 / R1) (Ralstonia taiwanensis (strain LMG 19424)) protein is Ribonuclease PH.